A 340-amino-acid polypeptide reads, in one-letter code: Glycerol-3-phosphate dehydrogenase [NAD(P)+] (340 aa).

4 residues coordinate NADPH: Ser-14, Phe-15, Arg-35, and Lys-108. Residues Lys-108 and Gly-136 each contribute to the sn-glycerol 3-phosphate site. Ala-140 contacts NADPH. Sn-glycerol 3-phosphate contacts are provided by Lys-191, Asp-244, Ser-254, Arg-255, and Asn-256. Lys-191 acts as the Proton acceptor in catalysis. Arg-255 is an NADPH binding site. Glu-281 serves as a coordination point for NADPH.

It belongs to the NAD-dependent glycerol-3-phosphate dehydrogenase family.

The protein localises to the cytoplasm. It catalyses the reaction sn-glycerol 3-phosphate + NAD(+) = dihydroxyacetone phosphate + NADH + H(+). It carries out the reaction sn-glycerol 3-phosphate + NADP(+) = dihydroxyacetone phosphate + NADPH + H(+). The protein operates within membrane lipid metabolism; glycerophospholipid metabolism. In terms of biological role, catalyzes the reduction of the glycolytic intermediate dihydroxyacetone phosphate (DHAP) to sn-glycerol 3-phosphate (G3P), the key precursor for phospholipid synthesis. The sequence is that of Glycerol-3-phosphate dehydrogenase [NAD(P)+] from Pseudomonas aeruginosa (strain LESB58).